A 183-amino-acid chain; its full sequence is ATP synthase subunit delta (183 aa).

It belongs to the ATPase delta chain family. F-type ATPases have 2 components, F(1) - the catalytic core - and F(0) - the membrane proton channel. F(1) has five subunits: alpha(3), beta(3), gamma(1), delta(1), epsilon(1). F(0) has three main subunits: a(1), b(2) and c(10-14). The alpha and beta chains form an alternating ring which encloses part of the gamma chain. F(1) is attached to F(0) by a central stalk formed by the gamma and epsilon chains, while a peripheral stalk is formed by the delta and b chains.

It localises to the cell inner membrane. Its function is as follows. F(1)F(0) ATP synthase produces ATP from ADP in the presence of a proton or sodium gradient. F-type ATPases consist of two structural domains, F(1) containing the extramembraneous catalytic core and F(0) containing the membrane proton channel, linked together by a central stalk and a peripheral stalk. During catalysis, ATP synthesis in the catalytic domain of F(1) is coupled via a rotary mechanism of the central stalk subunits to proton translocation. This protein is part of the stalk that links CF(0) to CF(1). It either transmits conformational changes from CF(0) to CF(1) or is implicated in proton conduction. In Syntrophobacter fumaroxidans (strain DSM 10017 / MPOB), this protein is ATP synthase subunit delta.